A 76-amino-acid polypeptide reads, in one-letter code: Amyloid protein A (76 aa).

This sequence belongs to the SAA family. Expressed by the liver; secreted in plasma.

The protein resides in the secreted. Functionally, major acute phase reactant. Apolipoprotein of the HDL complex. The sequence is that of Amyloid protein A (SAA1) from Macaca mulatta (Rhesus macaque).